We begin with the raw amino-acid sequence, 545 residues long: Tripartite motif-containing protein 55 (545 aa).

Residues 26–82 form an RING-type zinc finger; sequence CPICLEMFTKPVVILPCQHNLCRKCASDIFQASNPYLPTRGGTTVASGGRFRCPSCR. The segment at 119–161 adopts a B box-type zinc-finger fold; it reads LDQPMCEEHEEERINIYCLNCEVPTCSLCKVFGAHKDCQVAPL. C124, H127, C147, and H153 together coordinate Zn(2+). A coiled-coil region spans residues 219-258; that stretch reads YSILEERKTEMTQAITRTQEEKLEHVRTLIRKYSDHLENV. The COS domain maps to 269–327; sequence MDEPEMAVFLQNAKTLLQKITEASKAFQMEKIEQGYEIMNNFTVNLNREEKIIREIDFS. 2 disordered regions span residues 324-378 and 406-528; these read IDFS…SELA and LVTQ…GADS. The segment covering 328–355 has biased composition (acidic residues); the sequence is REEEDEDDEGEVDEEGEGEDAVEVEEAE. Composition is skewed to low complexity over residues 417–426 and 469–493; these read SQQTTQSETS and SAAE…AAVS. Over residues 495-506 the composition is skewed to polar residues; it reads KESSSTAATSQI. The span at 510-520 shows a compositional bias: low complexity; it reads ASSPQGQAAAL.

In terms of assembly, homooligomer and heterooligomer. Interacts with titin/TTN. Interacts with myosins. Interacts with SQSTM1 and NBR1. Probably interacts with TRIM63 and TRIM54. Targeted for degradation through the proteasomal and lysosomal pathways in the presence of SUMO3.

It localises to the nucleus. The protein resides in the cytoplasm. The catalysed reaction is S-ubiquitinyl-[E2 ubiquitin-conjugating enzyme]-L-cysteine + [acceptor protein]-L-lysine = [E2 ubiquitin-conjugating enzyme]-L-cysteine + N(6)-ubiquitinyl-[acceptor protein]-L-lysine.. E3 ubiquitin ligase that plays an important role in regulating cardiac development and contractility, muscle growth, metabolism, and fiber-type differentiation. Acts as a critical factor that regulates cardiomyocyte size during development in concert with TRIM63 by regulating E2F1-mediated gene expression. Plays a role in apoptosis induction in cardiomyocytes by promoting ubiquitination of the DUSP1 phosphatase. Promotes non-canonical NF-kappa-B signaling and B-cell-mediated immune responses by mediating NFKB2 'Lys-48'-linked ubiquitination and processing. In turn, NFKB2 is further processed by valosin-containing protein/VCP, an ATPase that mediates ubiquitin-dependent protein degradation by the proteasome. May play a role in preventing macrophages from producing inflammatory factors and migrating by downregulating the level of nuclear NF-kappa-B subunit RELA. Also modifies PPARG via polyubiquitination and accelerates PPARG proteasomal degradation to inhibit its activity. This is Tripartite motif-containing protein 55 (Trim55) from Rattus norvegicus (Rat).